The following is a 303-amino-acid chain: MWFKNLQIYRFTRPFELTVEQLETQLEACAFTPCGSQDISRFGWVKPLGKFGSTLTHSAAGHILICARKEEKMLPGTVVKEMLAEKVEAIEFEQGRALKKKEKEALKEEILHTLLPRAFSRTSQTFAWINPADNLMVVDAGSAKKADDLLALLRKSIGTLPVVPVALKNPPEITMTEWLNEGNLPASFTLEDEAELRSAMEHGGIIRCKQQDLMTDEIKNHLANDKLVTKLALNWGETLSFVLGDDLSIKRLKFSEELREQNDDVTSEDPAARLDADFALVTAELAQFIPALFAALGGEEQSI.

It belongs to the RdgC family.

It is found in the cytoplasm. The protein localises to the nucleoid. Functionally, may be involved in recombination. The polypeptide is Recombination-associated protein RdgC (Aeromonas hydrophila subsp. hydrophila (strain ATCC 7966 / DSM 30187 / BCRC 13018 / CCUG 14551 / JCM 1027 / KCTC 2358 / NCIMB 9240 / NCTC 8049)).